The sequence spans 297 residues: 4-hydroxy-tetrahydrodipicolinate synthase (297 aa).

Thr-49 contributes to the pyruvate binding site. The Proton donor/acceptor role is filled by Tyr-137. The Schiff-base intermediate with substrate role is filled by Lys-166. Ile-208 contributes to the pyruvate binding site.

Belongs to the DapA family. In terms of assembly, homotetramer; dimer of dimers.

It localises to the cytoplasm. The catalysed reaction is L-aspartate 4-semialdehyde + pyruvate = (2S,4S)-4-hydroxy-2,3,4,5-tetrahydrodipicolinate + H2O + H(+). Its pathway is amino-acid biosynthesis; L-lysine biosynthesis via DAP pathway; (S)-tetrahydrodipicolinate from L-aspartate: step 3/4. Catalyzes the condensation of (S)-aspartate-beta-semialdehyde [(S)-ASA] and pyruvate to 4-hydroxy-tetrahydrodipicolinate (HTPA). The chain is 4-hydroxy-tetrahydrodipicolinate synthase from Parabacteroides distasonis (strain ATCC 8503 / DSM 20701 / CIP 104284 / JCM 5825 / NCTC 11152).